The following is a 532-amino-acid chain: Vesicular acetylcholine transporter (532 aa).

The Cytoplasmic segment spans residues 1–33 (MESAEPAGQARAAATKLSEAVGAALQEPRRQRR). A helical membrane pass occupies residues 34–54 (LVLVIVCVALLLDNMLYMVIV). Residues 55–125 (PIVPDYIAHM…PTESEDVKIG (71 aa)) lie on the Lumenal, vesicle side of the membrane. N89 and N96 each carry an N-linked (GlcNAc...) asparagine glycan. The chain crosses the membrane as a helical span at residues 126–146 (VLFASKAILQLLVNPLSGPFI). Over 147-152 (DRMSYD) the chain is Cytoplasmic. A helical transmembrane segment spans residues 153 to 173 (VPLLIGLGVMFASTVLFAFAE). At 174-182 (DYATLFAAR) the chain is on the lumenal, vesicle side. Residues 183 to 203 (SLQGLGSAFADTSGIAMIADK) traverse the membrane as a helical segment. Residues 204–213 (YPEEPERSRA) lie on the Cytoplasmic side of the membrane. A helical membrane pass occupies residues 214–234 (LGVALAFISFGSLVAPPFGGI). Topologically, residues 235-242 (LYEFAGKR) are lumenal, vesicle. A helical transmembrane segment spans residues 243–263 (VPFLVLAAVSLFDALLLLAVA). The Cytoplasmic segment spans residues 264-289 (KPFSAAARARANLPVGTPIHRLMLDP). Residues 290-310 (YIAVVAGALTTCNIPLAFLEP) form a helical membrane-spanning segment. Residues 311–325 (TIATWMKHTMAASEW) lie on the Lumenal, vesicle side of the membrane. The chain crosses the membrane as a helical span at residues 326-346 (EMGMAWLPAFVPHVLGVYLTV). The Cytoplasmic portion of the chain corresponds to 347–356 (RLAARYPHLQ). Residues 357 to 377 (WLYGALGLAVIGASSCIVPAC) form a helical membrane-spanning segment. The Lumenal, vesicle portion of the chain corresponds to 378–388 (RSFAPLVVSLC). A helical transmembrane segment spans residues 389 to 409 (GLCFGIALVDTALLPTLAFLV). The Cytoplasmic portion of the chain corresponds to 410–422 (DVRHVSVYGSVYA). A helical transmembrane segment spans residues 423–443 (IADISYSVAYALGPIVAGHIV). Topologically, residues 444–447 (HSLG) are lumenal, vesicle. The helical transmembrane segment at 448–468 (FEQLSLGMGLANLLYAPVLLL) threads the bilayer. Residues 469-532 (LRNVGLLTRS…DDYNYYYTRS (64 aa)) are Cytoplasmic-facing. Residues 471 to 532 (NVGLLTRSRS…DDYNYYYTRS (62 aa)) form a mediates interaction with SEC14L1 region. Positions 502–523 (RPVSGQDGEPRSPPGPFDACED) are disordered.

This sequence belongs to the major facilitator superfamily. Vesicular transporter family. In terms of assembly, interacts with SEC14L1. In terms of tissue distribution, peripheral and central cholinergic nervous systems.

It is found in the cytoplasmic vesicle. It localises to the secretory vesicle. The protein localises to the synaptic vesicle membrane. It catalyses the reaction acetylcholine(out) + 2 H(+)(in) = acetylcholine(in) + 2 H(+)(out). The catalysed reaction is choline(in) + 2 H(+)(out) = choline(out) + 2 H(+)(in). The enzyme catalyses serotonin(in) + 2 H(+)(out) = serotonin(out) + 2 H(+)(in). Its activity is regulated as follows. Potently inhibited by L-vesamicol, reserpine and tetrabenazine. Functionally, electrogenic antiporter that exchanges one cholinergic neurotransmitter, acetylcholine or choline, with two intravesicular protons across the membrane of synaptic vesicles. Uses the electrochemical proton gradient established by the V-type proton-pump ATPase to store neurotransmitters inside the vesicles prior to their release via exocytosis. Determines cholinergic vesicular quantal size at presynaptic nerve terminals in developing neuro-muscular junctions with an impact on motor neuron differentiation and innervation pattern. Part of forebrain cholinergic system, regulates hippocampal synapse transmissions that underlie spatial memory formation. Can transport serotonin. This is Vesicular acetylcholine transporter (SLC18A3) from Homo sapiens (Human).